Reading from the N-terminus, the 520-residue chain is tRNA-2-methylthio-N(6)-dimethylallyladenosine synthase (520 aa).

One can recognise an MTTase N-terminal domain in the interval 77–195; sequence KKFLIRTYGC…LPHLLRDAIF (119 aa). Positions 86, 122, 156, 232, 236, and 239 each coordinate [4Fe-4S] cluster. The 231-residue stretch at 218–448 folds into the Radical SAM core domain; that stretch reads RKNKTQAWVN…ALVNDISNKR (231 aa). The TRAM domain occupies 450–513; sequence LDYQDKIVEV…TWSLDGEIVS (64 aa).

The protein belongs to the methylthiotransferase family. MiaB subfamily. As to quaternary structure, monomer. The cofactor is [4Fe-4S] cluster.

Its subcellular location is the cytoplasm. The catalysed reaction is N(6)-dimethylallyladenosine(37) in tRNA + (sulfur carrier)-SH + AH2 + 2 S-adenosyl-L-methionine = 2-methylsulfanyl-N(6)-dimethylallyladenosine(37) in tRNA + (sulfur carrier)-H + 5'-deoxyadenosine + L-methionine + A + S-adenosyl-L-homocysteine + 2 H(+). In terms of biological role, catalyzes the methylthiolation of N6-(dimethylallyl)adenosine (i(6)A), leading to the formation of 2-methylthio-N6-(dimethylallyl)adenosine (ms(2)i(6)A) at position 37 in tRNAs that read codons beginning with uridine. The polypeptide is tRNA-2-methylthio-N(6)-dimethylallyladenosine synthase (Shouchella clausii (strain KSM-K16) (Alkalihalobacillus clausii)).